The primary structure comprises 678 residues: uncharacterized protein (678 aa).

Residues 1-26 (MGVHFDDNANTTWEATDPGVSSDCDG) are disordered. Helical transmembrane passes span 119–139 (LLLL…LIYP), 245–265 (SFPC…GGCT), 317–337 (AAVV…YDSI), 340–360 (YWIN…PPLL), 371–391 (ELFS…YVVW), 405–425 (IAKV…NVTF), 443–463 (GALT…VIQA), 475–495 (YFKI…LPGL), and 519–539 (AYLF…RWDF).

Its subcellular location is the vacuole membrane. This is an uncharacterized protein from Saccharomyces cerevisiae (strain ATCC 204508 / S288c) (Baker's yeast).